The chain runs to 402 residues: MSTFKLMMDGRLVFAMAIAILSVVLSCGTCEKAKRAVRGRQDRPKEFPPPRYNYTILTRYNATALASPFINDQVKNVDLRIVTATRPCEMIALIAKTNIDSILKELAAAQKTYSARLTWFKIMPTCATPIHDVSYMKCNPKLSFAMCDERSDILWQASLITMAAETDDELGLVLAAPAHSASGLYRRVIEIDGRQIYTDFSVTIPSERCPIAFEQNFGNPDRCKTPEQYSRGEVFTRRFLGEFNFPQGEHMTWLKFWFVYDGGNLPVQFYEAQAFARPVPPDNHPGFDSVESEITQNKTDPKPGQADPKPNQPFKWPSIKHLAPRLDEVDEVIEPVTKPPKTSKSNSTFVGISVGLGIAGLVLVGVILYVCLRRKKELKKSAQNGLTRLRSTFKDVKYTQLP.

Positions methionine 1 to cysteine 30 are cleaved as a signal peptide. The Virion surface portion of the chain corresponds to glutamate 31 to glycine 355. N-linked (GlcNAc...) asparagine; by host glycosylation is found at asparagine 53 and asparagine 61. Cystine bridges form between cysteine 88–cysteine 209, cysteine 126–cysteine 223, and cysteine 138–cysteine 147. Positions proline 281–lysine 315 are disordered. Asparagine 297 and asparagine 346 each carry an N-linked (GlcNAc...) asparagine; by host glycan. A helical membrane pass occupies residues leucine 356–leucine 372. Residues arginine 373 to proline 402 are Intravirion-facing.

Belongs to the herpesviridae glycoprotein D family.

It localises to the virion membrane. In terms of biological role, envelope glycoprotein that binds to host cell entry receptors, promoting the virus entry into host cells. May trigger fusion with host membrane, by recruiting the fusion machinery composed of gB and gH/gL. The polypeptide is Envelope glycoprotein D (gD) (Equus caballus (Horse)).